The following is a 116-amino-acid chain: Ribonuclease P protein component (116 aa).

It belongs to the RnpA family. In terms of assembly, consists of a catalytic RNA component (M1 or rnpB) and a protein subunit.

The enzyme catalyses Endonucleolytic cleavage of RNA, removing 5'-extranucleotides from tRNA precursor.. Functionally, RNaseP catalyzes the removal of the 5'-leader sequence from pre-tRNA to produce the mature 5'-terminus. It can also cleave other RNA substrates such as 4.5S RNA. The protein component plays an auxiliary but essential role in vivo by binding to the 5'-leader sequence and broadening the substrate specificity of the ribozyme. The chain is Ribonuclease P protein component from Caldanaerobacter subterraneus subsp. tengcongensis (strain DSM 15242 / JCM 11007 / NBRC 100824 / MB4) (Thermoanaerobacter tengcongensis).